Reading from the N-terminus, the 108-residue chain is UPF0060 membrane protein DSY4629 (108 aa).

4 helical membrane-spanning segments follow: residues Ile5–Trp25, Pro31–Leu51, Val60–Asp80, and Asn86–Pro106.

Belongs to the UPF0060 family.

Its subcellular location is the cell membrane. The polypeptide is UPF0060 membrane protein DSY4629 (Desulfitobacterium hafniense (strain Y51)).